The sequence spans 316 residues: Homoserine kinase (316 aa).

97-107 (PHSRGLGSSAA) lines the ATP pocket.

It belongs to the GHMP kinase family. Homoserine kinase subfamily.

It localises to the cytoplasm. It catalyses the reaction L-homoserine + ATP = O-phospho-L-homoserine + ADP + H(+). It participates in amino-acid biosynthesis; L-threonine biosynthesis; L-threonine from L-aspartate: step 4/5. In terms of biological role, catalyzes the ATP-dependent phosphorylation of L-homoserine to L-homoserine phosphate. The polypeptide is Homoserine kinase (Mycobacterium tuberculosis (strain ATCC 25618 / H37Rv)).